The sequence spans 92 residues: MPRSLKKGPFVDEHLLNKVDAQNEAGTKQVIKTWSRRSTILPDFIGHTFAVHDGRKHVPVFVEDSMVGHKLGEFAPTKTFKGHVKDDKKGRR.

Belongs to the universal ribosomal protein uS19 family.

Functionally, protein S19 forms a complex with S13 that binds strongly to the 16S ribosomal RNA. The sequence is that of Small ribosomal subunit protein uS19 from Corynebacterium aurimucosum (strain ATCC 700975 / DSM 44827 / CIP 107346 / CN-1) (Corynebacterium nigricans).